Here is a 187-residue protein sequence, read N- to C-terminus: Adenylate kinase (187 aa).

10–15 (GSGKGT) provides a ligand contact to ATP. Positions 30 to 59 (STGDLLRSEVVAGTPLGLQAKQVMAQGDLV) are NMP. AMP contacts are provided by residues threonine 31, arginine 36, 57-59 (DLV), 85-88 (GYPR), and glutamine 92. The LID stretch occupies residues 126–136 (GRAQAEGREDD). ATP is bound at residue arginine 127. Positions 133 and 144 each coordinate AMP. Glycine 172 is an ATP binding site.

This sequence belongs to the adenylate kinase family. In terms of assembly, monomer.

It localises to the cytoplasm. It catalyses the reaction AMP + ATP = 2 ADP. It participates in purine metabolism; AMP biosynthesis via salvage pathway; AMP from ADP: step 1/1. Its function is as follows. Catalyzes the reversible transfer of the terminal phosphate group between ATP and AMP. Plays an important role in cellular energy homeostasis and in adenine nucleotide metabolism. This Xylella fastidiosa (strain M23) protein is Adenylate kinase.